Consider the following 218-residue polypeptide: Redox-sensing transcriptional repressor Rex (218 aa).

Residues 25-64 constitute a DNA-binding region (H-T-H motif); that stretch reads WYLSYVQLLHADGCESVSSTRIARAVGVDASLVAKDLSYV. An NAD(+)-binding site is contributed by 99-104; it reads GVGSLG.

It belongs to the transcriptional regulatory Rex family. Homodimer.

The protein localises to the cytoplasm. Modulates transcription in response to changes in cellular NADH/NAD(+) redox state. This Porphyromonas gingivalis (strain ATCC 33277 / DSM 20709 / CIP 103683 / JCM 12257 / NCTC 11834 / 2561) protein is Redox-sensing transcriptional repressor Rex.